Consider the following 74-residue polypeptide: Defensin-like protein 39 (74 aa).

Residues 1-28 (MEKKSLAALSFLLLLVLFVAQEIVVTEA) form the signal peptide. 4 cysteine pairs are disulfide-bonded: C31-C74, C42-C63, C48-C68, and C52-C70.

Belongs to the DEFL family. As to expression, pods.

The protein localises to the secreted. Possesses antifungal activity. The sequence is that of Defensin-like protein 39 (PI39) from Pisum sativum (Garden pea).